We begin with the raw amino-acid sequence, 163 residues long: UPF0763 protein JJD26997_0796 (163 aa).

Belongs to the UPF0763 family.

This is UPF0763 protein JJD26997_0796 from Campylobacter jejuni subsp. doylei (strain ATCC BAA-1458 / RM4099 / 269.97).